Reading from the N-terminus, the 200-residue chain is TATA-box-binding protein 1 (200 aa).

An N-acetylthreonine modification is found at Thr2. A run of 2 repeats spans residues 25–101 (LQNI…ARIV) and 115–192 (IQNI…YPVL).

The protein belongs to the TBP family. Belongs to the TFIID complex together with the TBP-associated factors (TAFs). Binds DNA as monomer. Interacts with TAF1 (via N-terminus). Interacts with MEE12/CCG1. Associates with PWP2 in the nucleus. Component of a nuclear protein complex containing at least TATA binding proteins (TBPs, e.g. TBP1 and TBP2) and ATX1.

The protein localises to the nucleus. General transcription factor that functions at the core of the DNA-binding multiprotein factor TFIID. Binding of TFIID to the TATA box is the initial transcriptional step of the pre-initiation complex (PIC), playing a role in the activation of eukaryotic genes transcribed by RNA polymerase II. The polypeptide is TATA-box-binding protein 1 (Arabidopsis thaliana (Mouse-ear cress)).